Here is a 402-residue protein sequence, read N- to C-terminus: Tyrosine--tRNA ligase (402 aa).

The short motif at 47–56 is the 'HIGH' region element; it reads PTAPDLHLGH. The 'KMSKS' region motif lies at 232–236; that stretch reads KMSKS. ATP is bound at residue Lys-235. Residues 341-401 enclose the S4 RNA-binding domain; the sequence is VGILDVLKQI…GKKRFMKLNI (61 aa).

It belongs to the class-I aminoacyl-tRNA synthetase family. TyrS type 2 subfamily. In terms of assembly, homodimer.

It is found in the cytoplasm. It carries out the reaction tRNA(Tyr) + L-tyrosine + ATP = L-tyrosyl-tRNA(Tyr) + AMP + diphosphate + H(+). Its function is as follows. Catalyzes the attachment of tyrosine to tRNA(Tyr) in a two-step reaction: tyrosine is first activated by ATP to form Tyr-AMP and then transferred to the acceptor end of tRNA(Tyr). This is Tyrosine--tRNA ligase from Helicobacter pylori (strain ATCC 700392 / 26695) (Campylobacter pylori).